A 614-amino-acid polypeptide reads, in one-letter code: Probable indole-3-acetic acid-amido synthetase GH3.2 (614 aa).

This sequence belongs to the IAA-amido conjugating enzyme family. As to expression, expressed in roots, flowers and callus.

Its function is as follows. May catalyze the synthesis of indole-3-acetic acid (IAA)-amino acid conjugates, providing a mechanism for the plant to cope with the presence of excess auxin. The polypeptide is Probable indole-3-acetic acid-amido synthetase GH3.2 (GH3.2) (Oryza sativa subsp. japonica (Rice)).